Reading from the N-terminus, the 316-residue chain is Retron Ec73 putative ribosyltransferase/DNA-binding protein (316 aa).

In terms of biological role, possible ribosyltransferase/DNA-binding component of antiviral defense system retron Ec73, composed of a non-coding RNA (ncRNA) followed by this protein then a reverse transcriptase (RT). Expression of this retron confers protection against bacteriophages SECphi4, SECphi6, SECphi27 and P1. At multiplicity of infection (MOI) of 0.02 cultures grow normally when infected with SECphi4 without collapsing, at MOI 2 cultures enter growth stasis. The polypeptide is Retron Ec73 putative ribosyltransferase/DNA-binding protein (Escherichia coli).